We begin with the raw amino-acid sequence, 696 residues long: F-box/LRR-repeat protein 5 (696 aa).

The interval 1 to 159 (MAPFPDEVDV…IKKQVIAQHS (159 aa)) is hemerythrin-like. Residues His-15, His-57, Glu-58, Glu-61, His-80, His-126, and Glu-130 each contribute to the Fe(3+) site. The 47-residue stretch at 205–251 (STHISQLPTEILLCLFRYLGPEDLCHCGQVCSAWSDLAKTGSLWRHL) folds into the F-box domain. 6 LRR repeats span residues 343–367 (SSTV…LDLT), 368–395 (QTDV…DLSG), 396–421 (CEKL…TCSE), 582–612 (CSSG…SLSG), 613–640 (CYQV…NLSG), and 641–666 (CLLI…HFYY). [2Fe-2S] cluster-binding residues include Cys-667, Cys-681, Cys-691, and Cys-692.

As to quaternary structure, part of a SCF (SKP1-cullin-F-box) protein ligase complex. It depends on [2Fe-2S] cluster as a cofactor. Ubiquitinated upon iron and oxygen depletion, leading to its degradation by the proteasome. Ubiquitination is regulated by the hemerythrin-like region that acts as an oxygen and iron sensor.

The protein resides in the cytoplasm. Its subcellular location is the perinuclear region. The protein localises to the nucleus. It participates in protein modification; protein ubiquitination. In terms of biological role, component of some SCF (SKP1-cullin-F-box) protein ligase complex that plays a central role in iron homeostasis by promoting the ubiquitination and subsequent degradation of ireb2/irp2. Upon high iron and oxygen level, it specifically recognizes and binds ireb2/irp2, promoting its ubiquitination and degradation by the proteasome. This is F-box/LRR-repeat protein 5 (fbxl5) from Salmo salar (Atlantic salmon).